A 171-amino-acid chain; its full sequence is Group 1 truncated hemoglobin LI410 (171 aa).

A chloroplast-targeting transit peptide spans 1-23 (MMRTVQLRTLRPCIRAQQQPVRA). Heme-binding residues include tyrosine 63 and histidine 111.

Belongs to the truncated hemoglobin family. Group I subfamily. It depends on heme as a cofactor.

The protein localises to the plastid. It is found in the chloroplast. In Chlamydomonas moewusii (Chlamydomonas eugametos), this protein is Group 1 truncated hemoglobin LI410 (LI410).